A 123-amino-acid chain; its full sequence is Fluoride-specific ion channel FluC 2 (123 aa).

2 helical membrane-spanning segments follow: residues 1–21 (MTMLWVCLAGGLGAVARFLLD) and 30–50 (VPVPLGTLVINVMGSLLLGLI). Residues G74 and T77 each contribute to the Na(+) site. Residues 99–119 (ALHCMGMAIAGVLAAILGLAL) form a helical membrane-spanning segment.

It belongs to the fluoride channel Fluc/FEX (TC 1.A.43) family.

It is found in the cell membrane. It carries out the reaction fluoride(in) = fluoride(out). Its activity is regulated as follows. Na(+) is not transported, but it plays an essential structural role and its presence is essential for fluoride channel function. In terms of biological role, fluoride-specific ion channel. Important for reducing fluoride concentration in the cell, thus reducing its toxicity. The sequence is that of Fluoride-specific ion channel FluC 2 from Cutibacterium acnes (strain DSM 16379 / KPA171202) (Propionibacterium acnes).